The sequence spans 263 residues: Small ribosomal subunit protein eS1 (263 aa).

Positions 235–254 (HGEGGGGKREAGDKSERPEG) are enriched in basic and acidic residues. The tract at residues 235-263 (HGEGGGGKREAGDKSERPEGYEPPVQESV) is disordered.

Belongs to the eukaryotic ribosomal protein eS1 family. In terms of assembly, component of the small ribosomal subunit. Mature ribosomes consist of a small (40S) and a large (60S) subunit. The 40S subunit contains about 33 different proteins and 1 molecule of RNA (18S). The 60S subunit contains about 49 different proteins and 3 molecules of RNA (28S, 5.8S and 5S).

Its subcellular location is the cytoplasm. This Bombyx mandarina (Wild silk moth) protein is Small ribosomal subunit protein eS1.